A 382-amino-acid chain; its full sequence is Histidinol-phosphate aminotransferase (382 aa).

Lys-215 is subject to N6-(pyridoxal phosphate)lysine. The disordered stretch occupies residues 363–382 (NIDNQSKTHSQTSSIRKGTI).

Belongs to the class-II pyridoxal-phosphate-dependent aminotransferase family. Histidinol-phosphate aminotransferase subfamily. Homodimer. Pyridoxal 5'-phosphate serves as cofactor.

The enzyme catalyses L-histidinol phosphate + 2-oxoglutarate = 3-(imidazol-4-yl)-2-oxopropyl phosphate + L-glutamate. It participates in amino-acid biosynthesis; L-histidine biosynthesis; L-histidine from 5-phospho-alpha-D-ribose 1-diphosphate: step 7/9. This is Histidinol-phosphate aminotransferase from Yersinia pseudotuberculosis serotype O:3 (strain YPIII).